A 157-amino-acid polypeptide reads, in one-letter code: Small ribosomal subunit protein uS7 (157 aa).

The protein belongs to the universal ribosomal protein uS7 family. Part of the 30S ribosomal subunit. Contacts proteins S9 and S11.

In terms of biological role, one of the primary rRNA binding proteins, it binds directly to 16S rRNA where it nucleates assembly of the head domain of the 30S subunit. Is located at the subunit interface close to the decoding center, probably blocks exit of the E-site tRNA. The protein is Small ribosomal subunit protein uS7 of Leptospira biflexa serovar Patoc (strain Patoc 1 / Ames).